The chain runs to 453 residues: UDP-glycosyltransferase 79B6 (453 aa).

UDP-alpha-D-glucose is bound by residues Ser-266, 325–327 (VQQ), 342–350 (HCGFGSMWE), and 364–367 (LGEQ).

Belongs to the UDP-glycosyltransferase family.

This is UDP-glycosyltransferase 79B6 (UGT79B6) from Arabidopsis thaliana (Mouse-ear cress).